The following is a 149-amino-acid chain: Heavy metal-associated isoprenylated plant protein 21 (149 aa).

An HMA domain is found at 25–88; the sequence is LQTVDIKVKM…RVKSTGKKAE (64 aa). A metal cation-binding residues include Cys36 and Cys39. At Cys146 the chain carries Cysteine methyl ester. The S-farnesyl cysteine moiety is linked to residue Cys146. Residues 147 to 149 constitute a propeptide, removed in mature form; that stretch reads SIM.

This sequence belongs to the HIPP family. Interacts with ZHD11/HB29. As to expression, expressed at low levels in leaves and sepals.

It is found in the membrane. Its function is as follows. Heavy-metal-binding protein. Binds cadmium. May be involved in cadmium transport and play a role in cadmium detoxification. The protein is Heavy metal-associated isoprenylated plant protein 21 of Arabidopsis thaliana (Mouse-ear cress).